A 566-amino-acid polypeptide reads, in one-letter code: ATP-binding protein SyrD (566 aa).

The 280-residue stretch at 22–301 (HPWLTFFTLL…LVSAMPMLAQ (280 aa)) folds into the ABC transmembrane type-1 domain. 6 helical membrane-spanning segments follow: residues 24–44 (WLTF…IAVV), 61–81 (LFWF…ASLF), 132–152 (LLIM…IAYL), 158–178 (VVFA…LLFF), 250–270 (QLTL…FAVI), and 279–299 (VLAV…MPML). The ABC transporter domain maps to 343-566 (IQLKNVHMNY…VKCAVEGKRA (224 aa)). 380-387 (GGNGCGKS) lines the ATP pocket.

This sequence belongs to the ABC transporter superfamily. As to quaternary structure, dimer.

It is found in the cell inner membrane. Its function is as follows. ATP-driven efflux pump necessary for the secretion of syringomycin. May specifically bind syringomycin and translocate it to the periplasmic space. SyrD is also required for full expression of the syrB gene. In Pseudomonas syringae pv. syringae, this protein is ATP-binding protein SyrD (syrD).